The following is a 538-amino-acid chain: Cytochrome P450 monooxygenase claM (538 aa).

A helical membrane pass occupies residues 36 to 56 (LSIGLVVLIGAISSFLLQQFL). N-linked (GlcNAc...) asparagine glycosylation is found at N306 and N425. C472 serves as a coordination point for heme.

This sequence belongs to the cytochrome P450 family. Requires heme as cofactor.

The protein localises to the membrane. The enzyme catalyses 2 nataloe emodin + reduced [NADPH--hemoprotein reductase] + O2 = cladofulvin + oxidized [NADPH--hemoprotein reductase] + 2 H2O + H(+). It participates in pigment biosynthesis. Functionally, cytochrome P450 monooxygenase; part of the gene cluster that mediates the biosynthesis of the bianthraquinone cladofulvin, a conidial pigment not required for virulence but that plays a role in fitness and resistance to environmental stresses including UV light and low-temperature stress. The pathway begins with the synthesis of atrochrysone thioester by the polyketide synthase (PKS) claG. The atrochrysone carboxyl ACP thioesterase claF then breaks the thioester bond and releases the atrochrysone carboxylic acid from claG. This compound is decarboxylated by claH to yield emodin, which is further converted to chrysophanol hydroquinone by the reductase claC and the dehydratase claB. The cytochrome monooxygenase P450 claM then catalyzes the dimerization of nataloe-emodin to cladofulvin. This Passalora fulva (Tomato leaf mold) protein is Cytochrome P450 monooxygenase claM.